The chain runs to 383 residues: Probable cell wall hydrolase LytN (383 aa).

Residues methionine 1–alanine 49 form the signal peptide. In terms of domain architecture, LysM spans glutamine 175 to valine 219. In terms of domain architecture, Peptidase C51 spans asparagine 241–arginine 378.

The protein resides in the secreted. Its function is as follows. Probably involved in peptidoglycan hydrolysis. The sequence is that of Probable cell wall hydrolase LytN (lytN) from Staphylococcus aureus (strain Mu50 / ATCC 700699).